The primary structure comprises 29 residues: Cytochrome b6-f complex subunit 8 (29 aa).

Residues Ile-3–Val-23 traverse the membrane as a helical segment.

Belongs to the PetN family. In terms of assembly, the 4 large subunits of the cytochrome b6-f complex are cytochrome b6, subunit IV (17 kDa polypeptide, PetD), cytochrome f and the Rieske protein, while the 4 small subunits are PetG, PetL, PetM and PetN. The complex functions as a dimer.

The protein resides in the plastid. Its subcellular location is the chloroplast thylakoid membrane. In terms of biological role, component of the cytochrome b6-f complex, which mediates electron transfer between photosystem II (PSII) and photosystem I (PSI), cyclic electron flow around PSI, and state transitions. The protein is Cytochrome b6-f complex subunit 8 of Glycine max (Soybean).